We begin with the raw amino-acid sequence, 269 residues long: 3-methyl-2-oxobutanoate hydroxymethyltransferase (269 aa).

D50 and D89 together coordinate Mg(2+). 3-methyl-2-oxobutanoate-binding positions include 50–51 (DS), D89, and K118. Position 120 (E120) interacts with Mg(2+). E187 functions as the Proton acceptor in the catalytic mechanism.

The protein belongs to the PanB family. Homodecamer; pentamer of dimers. Mg(2+) is required as a cofactor.

Its subcellular location is the cytoplasm. The enzyme catalyses 3-methyl-2-oxobutanoate + (6R)-5,10-methylene-5,6,7,8-tetrahydrofolate + H2O = 2-dehydropantoate + (6S)-5,6,7,8-tetrahydrofolate. Its pathway is cofactor biosynthesis; (R)-pantothenate biosynthesis; (R)-pantoate from 3-methyl-2-oxobutanoate: step 1/2. Functionally, catalyzes the reversible reaction in which hydroxymethyl group from 5,10-methylenetetrahydrofolate is transferred onto alpha-ketoisovalerate to form ketopantoate. This Nitrosomonas eutropha (strain DSM 101675 / C91 / Nm57) protein is 3-methyl-2-oxobutanoate hydroxymethyltransferase.